The chain runs to 249 residues: 5'-nucleotidase SurE (249 aa).

A divalent metal cation contacts are provided by aspartate 8, aspartate 9, serine 39, and asparagine 91.

The protein belongs to the SurE nucleotidase family. It depends on a divalent metal cation as a cofactor.

Its subcellular location is the cytoplasm. It catalyses the reaction a ribonucleoside 5'-phosphate + H2O = a ribonucleoside + phosphate. Nucleotidase that shows phosphatase activity on nucleoside 5'-monophosphates. The polypeptide is 5'-nucleotidase SurE (Pseudomonas putida (strain ATCC 700007 / DSM 6899 / JCM 31910 / BCRC 17059 / LMG 24140 / F1)).